Reading from the N-terminus, the 248-residue chain is Ureidoacrylate amidohydrolase RutB (248 aa).

Asp43 (proton acceptor) is an active-site residue. Lys152 is an active-site residue. The active-site Nucleophile is the Cys185.

It belongs to the isochorismatase family. RutB subfamily.

It carries out the reaction (Z)-3-ureidoacrylate + H2O + H(+) = (Z)-3-aminoacrylate + NH4(+) + CO2. It catalyses the reaction (Z)-3-ureidoacrylate + H2O = (Z)-3-aminoacrylate + carbamate + H(+). The enzyme catalyses (Z)-2-methylureidoacrylate + H2O + H(+) = (Z)-2-methylaminoacrylate + NH4(+) + CO2. Hydrolyzes ureidoacrylate to form aminoacrylate and carbamate. The carbamate hydrolyzes spontaneously, thereby releasing one of the nitrogen atoms of the pyrimidine ring as ammonia and one of its carbon atoms as CO2. This chain is Ureidoacrylate amidohydrolase RutB, found in Serratia proteamaculans (strain 568).